The primary structure comprises 282 residues: Pantothenate synthetase (282 aa).

30-37 (MGALHAGH) serves as a coordination point for ATP. Histidine 37 (proton donor) is an active-site residue. Glutamine 61 provides a ligand contact to (R)-pantoate. Glutamine 61 is a beta-alanine binding site. 147–150 (GEKD) contributes to the ATP binding site. Glutamine 153 contributes to the (R)-pantoate binding site. ATP is bound by residues valine 176 and 184–187 (LSSR).

It belongs to the pantothenate synthetase family. In terms of assembly, homodimer.

Its subcellular location is the cytoplasm. It catalyses the reaction (R)-pantoate + beta-alanine + ATP = (R)-pantothenate + AMP + diphosphate + H(+). It participates in cofactor biosynthesis; (R)-pantothenate biosynthesis; (R)-pantothenate from (R)-pantoate and beta-alanine: step 1/1. Its function is as follows. Catalyzes the condensation of pantoate with beta-alanine in an ATP-dependent reaction via a pantoyl-adenylate intermediate. The polypeptide is Pantothenate synthetase (Bacteroides fragilis (strain ATCC 25285 / DSM 2151 / CCUG 4856 / JCM 11019 / LMG 10263 / NCTC 9343 / Onslow / VPI 2553 / EN-2)).